The following is a 271-amino-acid chain: Energy-coupling factor transporter ATP-binding protein EcfA (271 aa).

Residues 2–231 form the ABC transporter domain; the sequence is ISIQNLTFYY…PLFLQQYKLT (230 aa). Position 34–41 (34–41) interacts with ATP; the sequence is GHNGSGKS.

The protein belongs to the ABC transporter superfamily. Energy-coupling factor EcfA family. In terms of assembly, forms a stable energy-coupling factor (ECF) transporter complex composed of 2 membrane-embedded substrate-binding proteins (S component), 2 ATP-binding proteins (A component) and 2 transmembrane proteins (T component).

Its subcellular location is the cell membrane. Its function is as follows. ATP-binding (A) component of a common energy-coupling factor (ECF) ABC-transporter complex. Unlike classic ABC transporters this ECF transporter provides the energy necessary to transport a number of different substrates. This chain is Energy-coupling factor transporter ATP-binding protein EcfA, found in Aster yellows witches'-broom phytoplasma (strain AYWB).